We begin with the raw amino-acid sequence, 117 residues long: MTRIKRGYIARRRRTKLRLFASSFRGAHSRLTRTMTQQRIRALVSAHRDRGKRKRDFRRLWITRINAVIHEMGVFYSYNEFIHNLYTKQLLLNRKILAQIALLNRSCLYTISTEIKN.

It belongs to the bacterial ribosomal protein bL20 family.

The protein localises to the plastid. The protein resides in the chloroplast. Its function is as follows. Binds directly to 23S ribosomal RNA and is necessary for the in vitro assembly process of the 50S ribosomal subunit. It is not involved in the protein synthesizing functions of that subunit. The polypeptide is Large ribosomal subunit protein bL20c (Lobularia maritima (Sweet alyssum)).